A 217-amino-acid polypeptide reads, in one-letter code: Ras-related protein RABA1g (217 aa).

20-27 (GDSGVGKS) contributes to the GTP binding site. The Effector region motif lies at 42–50 (SKSTIGVEF). GTP is bound by residues 68 to 72 (DTAGQ), 126 to 129 (NKAD), and 156 to 157 (SA). Residues Cys214 and Cys215 are each lipidated (S-geranylgeranyl cysteine).

The protein belongs to the small GTPase superfamily. Rab family.

The protein resides in the cell membrane. Functionally, intracellular vesicle trafficking and protein transport. The chain is Ras-related protein RABA1g (RABA1G) from Arabidopsis thaliana (Mouse-ear cress).